The chain runs to 580 residues: Cis-3-hydroxy-L-proline dehydratase (580 aa).

The active-site Proton acceptor is serine 66.

The protein belongs to the AcnX family. As to quaternary structure, monomer. It depends on Fe(3+) as a cofactor.

The enzyme catalyses cis-3-hydroxy-L-proline = 1-pyrroline-2-carboxylate + H2O. Its activity is regulated as follows. Inhibited by Zn(2+), Cd(2+) and Hg(2+), but not by Co(2+), Ni(2+), Mn(2+), Sr(2+), Mg(2+), or Fe(3+). Inhibited by pyrrole-2-carboxylate and its derivative 2-thiophenecarboxylate, but not by trans-aconitate, fluorocitrate and oxalomalate, which are typical inhibitors of the aconitase enzymes. Catalyzes the dehydration of cis-3-hydroxy-L-proline (c3LHyp) to Delta(1)-pyrroline-2-carboxylate (Pyr2C). Also has activity with (2S,3S,4R)-3,4-dihydroxyproline as substrate, albeit at about 300-fold lower rate. No activity with L-proline, trans-4-hydroxy-L-proline (t4LHyp), cis-4-hydroxy-L-proline (c4LHyp), trans-3-hydroxy-L-proline (t3LHyp), D-proline, cis-4-hydroxy-D-proline (c4DHyp), trans-4-hydroxy-D-proline (t4DHyp) or L-serine as substrates. No hydro-lyase activity with citrate or cis-acotinate. Does not catalyze 2-epimerization of c3LHyp to trans-3-hydroxy-D-proline (t3DHyp). Involved in a degradation pathway that converts c3LHyp to L-proline, which would allow P.aeruginosa to grow on c3LHyp as a sole carbon source. The protein is Cis-3-hydroxy-L-proline dehydratase of Pseudomonas aeruginosa (strain ATCC 15692 / DSM 22644 / CIP 104116 / JCM 14847 / LMG 12228 / 1C / PRS 101 / PAO1).